A 427-amino-acid chain; its full sequence is 12-alpha,13-alpha-dihydroxyfumitremorgin C prenyltransferase (427 aa).

Glutamate 94 lines the substrate pocket. Dimethylallyl diphosphate-binding residues include arginine 105, lysine 192, tyrosine 194, tyrosine 268, glutamine 353, tyrosine 355, tyrosine 419, and tyrosine 423.

The protein belongs to the tryptophan dimethylallyltransferase family.

The catalysed reaction is 12alpha,13alpha-dihydroxyfumitremorgin C + dimethylallyl diphosphate = fumitremorgin B + diphosphate. It participates in mycotoxin biosynthesis. In terms of biological role, 12-alpha,13-alpha-dihydroxyfumitremorgin C prenyltransferase; part of the gene cluster that mediates the biosynthesis of fumitremorgins, indole alkaloids that carry not only intriguing chemical structures, but also interesting biological and pharmacological activities. The biosynthesis of fumitremorgin-type alkaloids begins by condensation of the two amino acids L-tryptophan and L-proline to brevianamide F, catalyzed by the non-ribosomal peptide synthetase ftmA. Brevianamide F is then prenylated by the prenyltransferase ftmPT1/ftmB in the presence of dimethylallyl diphosphate, resulting in the formation of tryprostatin B. The three cytochrome P450 monooxygenases, ftmP450-1/ftmC, ftmP450-2/ftmE and ftmP450-3/FtmG, are responsible for the conversion of tryprostatin B to 6-hydroxytryprostatin B, tryprostatin A to fumitremorgin C and fumitremorgin C to 12,13-dihydroxyfumitremorgin C, respectively. The putative methyltransferase ftmMT/ftmD is expected for the conversion of 6-hydroxytryprostatin B to tryprostatin A. FtmPT2/FtmH catalyzes the prenylation of 12,13-dihydroxyfumitre-morgin C in the presence of dimethylallyl diphosphate, resulting in the formation of fumitremorgin B. Fumitremorgin B is further converted to verruculogen by ftmOx1/ftmF via the insertion of an endoperoxide bond between the two prenyl moieties. In some fungal species, verruculogen is further converted to fumitremorgin A, but the enzymes involved in this step have not been identified yet. The protein is 12-alpha,13-alpha-dihydroxyfumitremorgin C prenyltransferase of Aspergillus fumigatus (Neosartorya fumigata).